Reading from the N-terminus, the 206-residue chain is FMN-dependent NADH:quinone oxidoreductase 1 (206 aa).

Residues serine 10 and 16–18 contribute to the FMN site; that span reads SLS.

It belongs to the azoreductase type 1 family. As to quaternary structure, homodimer. Requires FMN as cofactor.

The enzyme catalyses 2 a quinone + NADH + H(+) = 2 a 1,4-benzosemiquinone + NAD(+). The catalysed reaction is N,N-dimethyl-1,4-phenylenediamine + anthranilate + 2 NAD(+) = 2-(4-dimethylaminophenyl)diazenylbenzoate + 2 NADH + 2 H(+). In terms of biological role, quinone reductase that provides resistance to thiol-specific stress caused by electrophilic quinones. Its function is as follows. Also exhibits azoreductase activity. Catalyzes the reductive cleavage of the azo bond in aromatic azo compounds to the corresponding amines. This is FMN-dependent NADH:quinone oxidoreductase 1 from Burkholderia lata (strain ATCC 17760 / DSM 23089 / LMG 22485 / NCIMB 9086 / R18194 / 383).